A 722-amino-acid chain; its full sequence is BTB/POZ domain-containing protein 9 (722 aa).

A BTB domain is found at 46–112 (ADVEFIVEEE…IYSGTLLLST (67 aa)). In terms of domain architecture, BACK spans 151–247 (CMILDAARLY…MNLEHLLQVV (97 aa)). Positions 565–593 (QDKNYLKKIADMEKEREKREKEKKTAKTD) form a coiled coil. Over residues 577-594 (EKEREKREKEKKTAKTDD) the composition is skewed to basic and acidic residues. Disordered stretches follow at residues 577–626 (EKER…VLRS) and 640–722 (PLTP…RETL). Residues 597 to 606 (IASTSGSSLA) are compositionally biased toward polar residues. Residues 607–626 (SGHAESPSTSSSSSQSVLRS) are compositionally biased toward low complexity. Over residues 641-658 (LTPPALSPPGTPALPAPL) the composition is skewed to pro residues. A compositionally biased stretch (polar residues) spans 670-679 (EQNQPSNISA). Residues 686–704 (SPSSRSNPSPSLSRSRSQS) are compositionally biased toward low complexity.

As to expression, detected in the brain (at protein level).

It localises to the cytoplasm. In terms of biological role, essential for the homeostatic regulation of sleep and motor activity, by depressing hyperactivity and wakefulness. May function, at least in part, by ensuring dopamine biosynthesis. In Drosophila melanogaster (Fruit fly), this protein is BTB/POZ domain-containing protein 9.